The chain runs to 115 residues: Cytochrome c oxidase subunit 3 (115 aa).

Transmembrane regions (helical) follow at residues 32–52 (CLQG…LQGL) and 70–90 (FFLA…FLMI).

This sequence belongs to the cytochrome c oxidase subunit 3 family. Component of the cytochrome c oxidase (complex IV, CIV), a multisubunit enzyme composed of a catalytic core of 3 subunits and several supernumerary subunits. The complex exists as a monomer or a dimer and forms supercomplexes (SCs) in the inner mitochondrial membrane with ubiquinol-cytochrome c oxidoreductase (cytochrome b-c1 complex, complex III, CIII).

The protein localises to the mitochondrion inner membrane. It carries out the reaction 4 Fe(II)-[cytochrome c] + O2 + 8 H(+)(in) = 4 Fe(III)-[cytochrome c] + 2 H2O + 4 H(+)(out). Its function is as follows. Component of the cytochrome c oxidase, the last enzyme in the mitochondrial electron transport chain which drives oxidative phosphorylation. The respiratory chain contains 3 multisubunit complexes succinate dehydrogenase (complex II, CII), ubiquinol-cytochrome c oxidoreductase (cytochrome b-c1 complex, complex III, CIII) and cytochrome c oxidase (complex IV, CIV), that cooperate to transfer electrons derived from NADH and succinate to molecular oxygen, creating an electrochemical gradient over the inner membrane that drives transmembrane transport and the ATP synthase. Cytochrome c oxidase is the component of the respiratory chain that catalyzes the reduction of oxygen to water. Electrons originating from reduced cytochrome c in the intermembrane space (IMS) are transferred via the dinuclear copper A center (CU(A)) of subunit 2 and heme A of subunit 1 to the active site in subunit 1, a binuclear center (BNC) formed by heme A3 and copper B (CU(B)). The BNC reduces molecular oxygen to 2 water molecules using 4 electrons from cytochrome c in the IMS and 4 protons from the mitochondrial matrix. In Artemia salina (Brine shrimp), this protein is Cytochrome c oxidase subunit 3 (COIII).